Reading from the N-terminus, the 100-residue chain is Glutamyl-tRNA(Gln) amidotransferase subunit C (100 aa).

This sequence belongs to the GatC family. In terms of assembly, heterotrimer of A, B and C subunits.

The enzyme catalyses L-glutamyl-tRNA(Gln) + L-glutamine + ATP + H2O = L-glutaminyl-tRNA(Gln) + L-glutamate + ADP + phosphate + H(+). It carries out the reaction L-aspartyl-tRNA(Asn) + L-glutamine + ATP + H2O = L-asparaginyl-tRNA(Asn) + L-glutamate + ADP + phosphate + 2 H(+). Functionally, allows the formation of correctly charged Asn-tRNA(Asn) or Gln-tRNA(Gln) through the transamidation of misacylated Asp-tRNA(Asn) or Glu-tRNA(Gln) in organisms which lack either or both of asparaginyl-tRNA or glutaminyl-tRNA synthetases. The reaction takes place in the presence of glutamine and ATP through an activated phospho-Asp-tRNA(Asn) or phospho-Glu-tRNA(Gln). This is Glutamyl-tRNA(Gln) amidotransferase subunit C from Streptococcus pyogenes serotype M1.